The chain runs to 112 residues: Large ribosomal subunit protein bL21 (112 aa).

This sequence belongs to the bacterial ribosomal protein bL21 family. Part of the 50S ribosomal subunit. Contacts protein L20.

Its function is as follows. This protein binds to 23S rRNA in the presence of protein L20. The sequence is that of Large ribosomal subunit protein bL21 from Buchnera aphidicola subsp. Baizongia pistaciae (strain Bp).